The primary structure comprises 133 residues: Large ribosomal subunit protein bL17 (133 aa).

It belongs to the bacterial ribosomal protein bL17 family. As to quaternary structure, part of the 50S ribosomal subunit. Contacts protein L32.

The polypeptide is Large ribosomal subunit protein bL17 (Ehrlichia chaffeensis (strain ATCC CRL-10679 / Arkansas)).